Reading from the N-terminus, the 460-residue chain is Probable serine/threonine-protein kinase kinase DDB_G0280557 (460 aa).

The Protein kinase domain maps to 102–416 (INLKSITDCG…IDQLLAHKYF (315 aa)). Residues Lys131 and 154–162 (QRHFQQHPL) each bind ATP. Asp250 (proton acceptor) is an active-site residue.

It belongs to the protein kinase superfamily. CMGC Ser/Thr protein kinase family. MAP kinase subfamily.

It carries out the reaction L-seryl-[protein] + ATP = O-phospho-L-seryl-[protein] + ADP + H(+). The catalysed reaction is L-threonyl-[protein] + ATP = O-phospho-L-threonyl-[protein] + ADP + H(+). In Dictyostelium discoideum (Social amoeba), this protein is Probable serine/threonine-protein kinase kinase DDB_G0280557.